The sequence spans 29 residues: MQLVLAAKYIGAAIATIGLIGADDKTSNM.

This sequence belongs to the ATPase C chain family. In terms of assembly, F-type ATPases have 2 components, CF(1) - the catalytic core - and CF(0) - the membrane proton channel. CF(1) has five subunits: alpha(3), beta(3), gamma(1), delta(1), epsilon(1). CF(0) has three main subunits: a, b and c.

The protein localises to the mitochondrion membrane. In terms of biological role, mitochondrial membrane ATP synthase (F(1)F(0) ATP synthase or Complex V) produces ATP from ADP in the presence of a proton gradient across the membrane which is generated by electron transport complexes of the respiratory chain. F-type ATPases consist of two structural domains, F(1) - containing the extramembraneous catalytic core and F(0) - containing the membrane proton channel, linked together by a central stalk and a peripheral stalk. During catalysis, ATP synthesis in the catalytic domain of F(1) is coupled via a rotary mechanism of the central stalk subunits to proton translocation. Part of the complex F(0) domain. A homomeric c-ring of probably 10 subunits is part of the complex rotary element. This chain is ATP synthase subunit 9, mitochondrial (ATP9), found in Wickerhamomyces pijperi (Yeast).